The primary structure comprises 237 residues: Demethylmenaquinone methyltransferase (237 aa).

S-adenosyl-L-methionine-binding positions include T62, D80, 102–103, and S119; that span reads DA.

Belongs to the class I-like SAM-binding methyltransferase superfamily. MenG/UbiE family.

It carries out the reaction a 2-demethylmenaquinol + S-adenosyl-L-methionine = a menaquinol + S-adenosyl-L-homocysteine + H(+). Its pathway is quinol/quinone metabolism; menaquinone biosynthesis; menaquinol from 1,4-dihydroxy-2-naphthoate: step 2/2. Methyltransferase required for the conversion of demethylmenaquinol (DMKH2) to menaquinol (MKH2). The protein is Demethylmenaquinone methyltransferase of Renibacterium salmoninarum (strain ATCC 33209 / DSM 20767 / JCM 11484 / NBRC 15589 / NCIMB 2235).